The sequence spans 323 residues: Delta(7)-sterol 5(6)-desaturase ERG3B (323 aa).

A run of 3 helical transmembrane segments spans residues 67 to 87, 112 to 132, and 150 to 170; these read ASIL…SAAL, IQSS…FFLG, and SWLA…IYWI. Residues 157 to 285 enclose the Fatty acid hydroxylase domain; it reads ILYMVFNDLG…YFTWADNYWG (129 aa). The Histidine box-1 signature appears at 171-175; the sequence is HRLEH. The Histidine box-2 signature appears at 184 to 188; sequence HKPHH. The Histidine box-3 motif lies at 262–266; the sequence is HTLHH.

Belongs to the sterol desaturase family.

It is found in the endoplasmic reticulum membrane. It carries out the reaction episterol + 2 Fe(II)-[cytochrome b5] + O2 + 2 H(+) = 5-dehydroepisterol + 2 Fe(III)-[cytochrome b5] + 2 H2O. It participates in steroid metabolism; ergosterol biosynthesis. Its function is as follows. C-5 sterol desaturase; part of the third module of ergosterol biosynthesis pathway that includes the late steps of the pathway. ERG3A and ERG3BB catalyze the introduction of a C-5 double bond in the B ring to produce 5-dehydroepisterol. The third module or late pathway involves the ergosterol synthesis itself through consecutive reactions that mainly occur in the endoplasmic reticulum (ER) membrane. Firstly, the squalene synthase ERG9 catalyzes the condensation of 2 farnesyl pyrophosphate moieties to form squalene, which is the precursor of all steroids. Squalene synthase is crucial for balancing the incorporation of farnesyl diphosphate (FPP) into sterol and nonsterol isoprene synthesis. Secondly, squalene is converted into lanosterol by the consecutive action of the squalene epoxidase ERG1 and the lanosterol synthase ERG7. Then, the delta(24)-sterol C-methyltransferase ERG6 methylates lanosterol at C-24 to produce eburicol. Eburicol is the substrate of the sterol 14-alpha demethylase encoded by CYP51A, CYP51B and CYP51C, to yield 4,4,24-trimethyl ergosta-8,14,24(28)-trienol. CYP51B encodes the enzyme primarily responsible for sterol 14-alpha-demethylation, and plays an essential role in ascospore formation. CYP51A encodes an additional sterol 14-alpha-demethylase, induced on ergosterol depletion and responsible for the intrinsic variation in azole sensitivity. The third CYP51 isoform, CYP51C, does not encode a sterol 14-alpha-demethylase, but is required for full virulence on host wheat ears. The C-14 reductase ERG24 then reduces the C14=C15 double bond which leads to 4,4-dimethylfecosterol. A sequence of further demethylations at C-4, involving the C-4 demethylation complex containing the C-4 methylsterol oxidases ERG25, the sterol-4-alpha-carboxylate 3-dehydrogenase ERG26 and the 3-keto-steroid reductase ERG27, leads to the production of fecosterol via 4-methylfecosterol. ERG28 has a role as a scaffold to help anchor ERG25, ERG26 and ERG27 to the endoplasmic reticulum. The C-8 sterol isomerase ERG2 then catalyzes the reaction which results in unsaturation at C-7 in the B ring of sterols and thus converts fecosterol to episterol. The sterol-C5-desaturases ERG3A and ERG3BB then catalyze the introduction of a C-5 double bond in the B ring to produce 5-dehydroepisterol. The C-22 sterol desaturases ERG5A and ERG5B further convert 5-dehydroepisterol into ergosta-5,7,22,24(28)-tetraen-3beta-ol by forming the C-22(23) double bond in the sterol side chain. Finally, ergosta-5,7,22,24(28)-tetraen-3beta-ol is substrate of the C-24(28) sterol reductase ERG4 to produce ergosterol. The polypeptide is Delta(7)-sterol 5(6)-desaturase ERG3B (Gibberella zeae (strain ATCC MYA-4620 / CBS 123657 / FGSC 9075 / NRRL 31084 / PH-1) (Wheat head blight fungus)).